The sequence spans 159 residues: Ribosomal RNA large subunit methyltransferase H (159 aa).

S-adenosyl-L-methionine is bound by residues Leu-76, Gly-107, and 126–131 (LSSLTL).

Belongs to the RNA methyltransferase RlmH family. In terms of assembly, homodimer.

Its subcellular location is the cytoplasm. The enzyme catalyses pseudouridine(1915) in 23S rRNA + S-adenosyl-L-methionine = N(3)-methylpseudouridine(1915) in 23S rRNA + S-adenosyl-L-homocysteine + H(+). Functionally, specifically methylates the pseudouridine at position 1915 (m3Psi1915) in 23S rRNA. The polypeptide is Ribosomal RNA large subunit methyltransferase H (Cupriavidus necator (strain ATCC 17699 / DSM 428 / KCTC 22496 / NCIMB 10442 / H16 / Stanier 337) (Ralstonia eutropha)).